The chain runs to 338 residues: Holliday junction branch migration complex subunit RuvB (338 aa).

Residues 4-186 (ADRLIAPDNP…FGITQRLEYY (183 aa)) form a large ATPase domain (RuvB-L) region. ATP-binding positions include I25, R26, G67, K70, T71, T72, 133 to 135 (EDY), R176, Y186, and R223. Mg(2+) is bound at residue T71. Residues 187 to 257 (KVEDLQNIVQ…VADKALNMLD (71 aa)) are small ATPAse domain (RuvB-S). A head domain (RuvB-H) region spans residues 260-338 (AKGFDYMDRK…HFGIDKPSNR (79 aa)). DNA is bound by residues R296, R315, and R320.

This sequence belongs to the RuvB family. Homohexamer. Forms an RuvA(8)-RuvB(12)-Holliday junction (HJ) complex. HJ DNA is sandwiched between 2 RuvA tetramers; dsDNA enters through RuvA and exits via RuvB. An RuvB hexamer assembles on each DNA strand where it exits the tetramer. Each RuvB hexamer is contacted by two RuvA subunits (via domain III) on 2 adjacent RuvB subunits; this complex drives branch migration. In the full resolvosome a probable DNA-RuvA(4)-RuvB(12)-RuvC(2) complex forms which resolves the HJ.

The protein resides in the cytoplasm. It carries out the reaction ATP + H2O = ADP + phosphate + H(+). Functionally, the RuvA-RuvB-RuvC complex processes Holliday junction (HJ) DNA during genetic recombination and DNA repair, while the RuvA-RuvB complex plays an important role in the rescue of blocked DNA replication forks via replication fork reversal (RFR). RuvA specifically binds to HJ cruciform DNA, conferring on it an open structure. The RuvB hexamer acts as an ATP-dependent pump, pulling dsDNA into and through the RuvAB complex. RuvB forms 2 homohexamers on either side of HJ DNA bound by 1 or 2 RuvA tetramers; 4 subunits per hexamer contact DNA at a time. Coordinated motions by a converter formed by DNA-disengaged RuvB subunits stimulates ATP hydrolysis and nucleotide exchange. Immobilization of the converter enables RuvB to convert the ATP-contained energy into a lever motion, pulling 2 nucleotides of DNA out of the RuvA tetramer per ATP hydrolyzed, thus driving DNA branch migration. The RuvB motors rotate together with the DNA substrate, which together with the progressing nucleotide cycle form the mechanistic basis for DNA recombination by continuous HJ branch migration. Branch migration allows RuvC to scan DNA until it finds its consensus sequence, where it cleaves and resolves cruciform DNA. This chain is Holliday junction branch migration complex subunit RuvB, found in Vibrio atlanticus (strain LGP32) (Vibrio splendidus (strain Mel32)).